The primary structure comprises 102 residues: Protein YcgL (102 aa).

The YcgL domain occupies 14 to 98 (MFCVIYRSSK…PPEDLLKQHL (85 aa)).

This chain is Protein YcgL, found in Salmonella agona (strain SL483).